The sequence spans 434 residues: Serine--tRNA ligase (434 aa).

L-serine is bound at residue 239–241; the sequence is TAE. 270 to 272 provides a ligand contact to ATP; the sequence is RSE. E293 contacts L-serine. Position 357–360 (357–360) interacts with ATP; that stretch reads EISS. Position 393 (S393) interacts with L-serine.

This sequence belongs to the class-II aminoacyl-tRNA synthetase family. Type-1 seryl-tRNA synthetase subfamily. Homodimer. The tRNA molecule binds across the dimer.

The protein resides in the cytoplasm. It catalyses the reaction tRNA(Ser) + L-serine + ATP = L-seryl-tRNA(Ser) + AMP + diphosphate + H(+). The enzyme catalyses tRNA(Sec) + L-serine + ATP = L-seryl-tRNA(Sec) + AMP + diphosphate + H(+). It functions in the pathway aminoacyl-tRNA biosynthesis; selenocysteinyl-tRNA(Sec) biosynthesis; L-seryl-tRNA(Sec) from L-serine and tRNA(Sec): step 1/1. In terms of biological role, catalyzes the attachment of serine to tRNA(Ser). Is also able to aminoacylate tRNA(Sec) with serine, to form the misacylated tRNA L-seryl-tRNA(Sec), which will be further converted into selenocysteinyl-tRNA(Sec). This Mesorhizobium japonicum (strain LMG 29417 / CECT 9101 / MAFF 303099) (Mesorhizobium loti (strain MAFF 303099)) protein is Serine--tRNA ligase.